The chain runs to 382 residues: Chaperone protein DnaJ (382 aa).

The J domain occupies 5 to 70; sequence DYYEVLGLQK…QKRAAYDQYG (66 aa). Residues 134-212 form a CR-type zinc finger; sequence GTTKDIQINT…CHGEGRVHKK (79 aa). Residues cysteine 147, cysteine 150, cysteine 164, cysteine 167, cysteine 186, cysteine 189, cysteine 200, and cysteine 203 each contribute to the Zn(2+) site. CXXCXGXG motif repeat units lie at residues 147–154, 164–171, 186–193, and 200–207; these read CDSCGGSG, CPHCHGSG, CPTCHGSG, and CRNCHGEG.

It belongs to the DnaJ family. In terms of assembly, homodimer. Requires Zn(2+) as cofactor.

Its subcellular location is the cytoplasm. In terms of biological role, participates actively in the response to hyperosmotic and heat shock by preventing the aggregation of stress-denatured proteins and by disaggregating proteins, also in an autonomous, DnaK-independent fashion. Unfolded proteins bind initially to DnaJ; upon interaction with the DnaJ-bound protein, DnaK hydrolyzes its bound ATP, resulting in the formation of a stable complex. GrpE releases ADP from DnaK; ATP binding to DnaK triggers the release of the substrate protein, thus completing the reaction cycle. Several rounds of ATP-dependent interactions between DnaJ, DnaK and GrpE are required for fully efficient folding. Also involved, together with DnaK and GrpE, in the DNA replication of plasmids through activation of initiation proteins. This chain is Chaperone protein DnaJ, found in Haemophilus influenzae (strain ATCC 51907 / DSM 11121 / KW20 / Rd).